The primary structure comprises 480 residues: Adenosylhomocysteinase (480 aa).

Substrate is bound by residues Thr63, Asp142, and Glu203. 204-206 (TTT) contacts NAD(+). Residues Lys233 and Asp237 each coordinate substrate. NAD(+)-binding positions include Asn238, 267–272 (GYGDVG), Glu290, Asn325, 346–348 (IGH), and Asn394.

This sequence belongs to the adenosylhomocysteinase family. It depends on NAD(+) as a cofactor.

The protein resides in the cytoplasm. The catalysed reaction is S-adenosyl-L-homocysteine + H2O = L-homocysteine + adenosine. It participates in amino-acid biosynthesis; L-homocysteine biosynthesis; L-homocysteine from S-adenosyl-L-homocysteine: step 1/1. Its function is as follows. May play a key role in the regulation of the intracellular concentration of adenosylhomocysteine. The sequence is that of Adenosylhomocysteinase from Xylella fastidiosa (strain 9a5c).